Consider the following 254-residue polypeptide: Anamorsin homolog (254 aa).

The N-terminal SAM-like domain stretch occupies residues 4–132 (VQENNHVLYI…EIGSAAKLSL (129 aa)). The interval 132–167 (LGGNKAKVAAVWKLDVDDDDDERIDEDELLDEEDKV) is linker. [2Fe-2S] cluster is bound by residues C177, C186, C189, and C191. The interval 177 to 191 (CGTTGKRKACKDCSC) is fe-S binding site A. Positions 215, 218, 226, and 229 each coordinate [4Fe-4S] cluster. 2 short sequence motifs (cx2C motif) span residues 215-218 (CGSC) and 226-229 (CATC). Residues 215–229 (CGSCYLGDAFRCATC) form a fe-S binding site B region.

The protein belongs to the anamorsin family. In terms of assembly, monomer. It depends on [2Fe-2S] cluster as a cofactor. [4Fe-4S] cluster serves as cofactor.

Its subcellular location is the cytoplasm. The protein localises to the mitochondrion intermembrane space. Functionally, component of the cytosolic iron-sulfur (Fe-S) protein assembly (CIA) machinery. Required for the maturation of extramitochondrial Fe-S proteins. Part of an electron transfer chain functioning in an early step of cytosolic Fe-S biogenesis, facilitating the de novo assembly of a [4Fe-4S] cluster on the cytosolic Fe-S scaffold complex. Electrons are transferred from NADPH via a FAD- and FMN-containing diflavin oxidoreductase. Together with the diflavin oxidoreductase, also required for the assembly of the diferric tyrosyl radical cofactor of ribonucleotide reductase (RNR), probably by providing electrons for reduction during radical cofactor maturation in the catalytic small subunit. The polypeptide is Anamorsin homolog (Aedes aegypti (Yellowfever mosquito)).